The sequence spans 54 residues: VTSYTLNEIVPLKDVVPEWVRIGFSATTGAEFAAHEVLSWSFHSELEETSASKQ.

This sequence belongs to the leguminous lectin family. In terms of assembly, tetramer of two alpha and two beta chains.

This Lathyrus tingitanus (Tangier pea) protein is Lectin alpha chain.